Consider the following 249-residue polypeptide: Probable transcriptional regulatory protein Sfum_0996 (249 aa).

The protein belongs to the TACO1 family.

Its subcellular location is the cytoplasm. The sequence is that of Probable transcriptional regulatory protein Sfum_0996 from Syntrophobacter fumaroxidans (strain DSM 10017 / MPOB).